A 671-amino-acid chain; its full sequence is DNA ligase (671 aa).

NAD(+) contacts are provided by residues 32–36 (DAEYD), 81–82 (SL), and Glu-113. The N6-AMP-lysine intermediate role is filled by Lys-115. NAD(+)-binding residues include Arg-136, Glu-173, Lys-290, and Lys-314. Cys-408, Cys-411, Cys-426, and Cys-432 together coordinate Zn(2+). In terms of domain architecture, BRCT spans 593–671 (EIDSPFAGKT…EAEMLRLLGS (79 aa)).

It belongs to the NAD-dependent DNA ligase family. LigA subfamily. Requires Mg(2+) as cofactor. Mn(2+) is required as a cofactor.

The enzyme catalyses NAD(+) + (deoxyribonucleotide)n-3'-hydroxyl + 5'-phospho-(deoxyribonucleotide)m = (deoxyribonucleotide)n+m + AMP + beta-nicotinamide D-nucleotide.. DNA ligase that catalyzes the formation of phosphodiester linkages between 5'-phosphoryl and 3'-hydroxyl groups in double-stranded DNA using NAD as a coenzyme and as the energy source for the reaction. It is essential for DNA replication and repair of damaged DNA. The chain is DNA ligase from Escherichia coli O7:K1 (strain IAI39 / ExPEC).